Consider the following 40-residue polypeptide: MADTTGRIPLWLIGTVAGILIIGLLGVFFYGSYSGLGSSL.

A helical membrane pass occupies residues 8–28 (IPLWLIGTVAGILIIGLLGVF).

The protein belongs to the PsbJ family. PSII is composed of 1 copy each of membrane proteins PsbA, PsbB, PsbC, PsbD, PsbE, PsbF, PsbH, PsbI, PsbJ, PsbK, PsbL, PsbM, PsbT, PsbX, PsbY, PsbZ, Psb30/Ycf12, at least 3 peripheral proteins of the oxygen-evolving complex and a large number of cofactors. It forms dimeric complexes.

The protein resides in the plastid. The protein localises to the chloroplast thylakoid membrane. Its function is as follows. One of the components of the core complex of photosystem II (PSII). PSII is a light-driven water:plastoquinone oxidoreductase that uses light energy to abstract electrons from H(2)O, generating O(2) and a proton gradient subsequently used for ATP formation. It consists of a core antenna complex that captures photons, and an electron transfer chain that converts photonic excitation into a charge separation. This Nandina domestica (Heavenly bamboo) protein is Photosystem II reaction center protein J.